The chain runs to 505 residues: Lysine--tRNA ligase (505 aa).

Residues E415 and E422 each contribute to the Mg(2+) site.

Belongs to the class-II aminoacyl-tRNA synthetase family. In terms of assembly, homodimer. The cofactor is Mg(2+).

It localises to the cytoplasm. It catalyses the reaction tRNA(Lys) + L-lysine + ATP = L-lysyl-tRNA(Lys) + AMP + diphosphate. The chain is Lysine--tRNA ligase (lysS) from Salmonella typhimurium (strain LT2 / SGSC1412 / ATCC 700720).